Consider the following 307-residue polypeptide: Oxygen-dependent coproporphyrinogen-III oxidase (307 aa).

S99 is a binding site for substrate. A divalent metal cation is bound by residues H103 and H113. H113 (proton donor) is an active-site residue. Position 115–117 (115–117 (NVR)) interacts with substrate. A divalent metal cation-binding residues include H152 and H182. The interval 247 to 282 (YVEFNLVFDRGTLFGLQSGGRTESILLSMPPTAGWR) is important for dimerization. Residue 265 to 267 (GGR) participates in substrate binding.

It belongs to the aerobic coproporphyrinogen-III oxidase family. Homodimer. It depends on a divalent metal cation as a cofactor.

Its subcellular location is the cytoplasm. It carries out the reaction coproporphyrinogen III + O2 + 2 H(+) = protoporphyrinogen IX + 2 CO2 + 2 H2O. It participates in porphyrin-containing compound metabolism; protoporphyrin-IX biosynthesis; protoporphyrinogen-IX from coproporphyrinogen-III (O2 route): step 1/1. Involved in the heme biosynthesis. Catalyzes the aerobic oxidative decarboxylation of propionate groups of rings A and B of coproporphyrinogen-III to yield the vinyl groups in protoporphyrinogen-IX. The sequence is that of Oxygen-dependent coproporphyrinogen-III oxidase from Burkholderia mallei (strain SAVP1).